A 162-amino-acid chain; its full sequence is Probable chemoreceptor glutamine deamidase CheD 2 (162 aa).

The protein belongs to the CheD family.

The catalysed reaction is L-glutaminyl-[protein] + H2O = L-glutamyl-[protein] + NH4(+). Probably deamidates glutamine residues to glutamate on methyl-accepting chemotaxis receptors (MCPs), playing an important role in chemotaxis. In Geobacter metallireducens (strain ATCC 53774 / DSM 7210 / GS-15), this protein is Probable chemoreceptor glutamine deamidase CheD 2.